We begin with the raw amino-acid sequence, 65 residues long: MRNLCFVFIFISLLAHGSTHGPDSCNHDRGLCRVGNCNPGEYLAKYCFEPVILCCKPLSPTPTKT.

The signal sequence occupies residues 1–19; that stretch reads MRNLCFVFIFISLLAHGST. Intrachain disulfides connect Cys25-Cys54, Cys32-Cys47, and Cys37-Cys55.

Belongs to the beta-defensin family. Expressed in the large intestine, kidney liver, gall bladder, testis, ovary and male and female reproductive tracts. Expressed in the ovarian stroma and the theca and granulosa layers of the ovarian follicle.

The protein localises to the secreted. Its subcellular location is the cytoplasmic granule. Its function is as follows. Has bactericidal activity. The chain is Gallinacin-12 (GAL12) from Gallus gallus (Chicken).